Consider the following 508-residue polypeptide: Lysine--tRNA ligase (508 aa).

Residues glutamate 418 and glutamate 425 each contribute to the Mg(2+) site.

Belongs to the class-II aminoacyl-tRNA synthetase family. Homodimer. It depends on Mg(2+) as a cofactor.

It is found in the cytoplasm. The enzyme catalyses tRNA(Lys) + L-lysine + ATP = L-lysyl-tRNA(Lys) + AMP + diphosphate. The sequence is that of Lysine--tRNA ligase from Burkholderia pseudomallei (strain 668).